The primary structure comprises 215 residues: Histone-like protein 18C (215 aa).

The interval 140–215 is disordered; the sequence is CTPRKENKCS…PKSSKPKCSM (76 aa). Composition is skewed to basic residues over residues 149-190 and 197-215; these read SKPR…RPRK and AKAKPRCLKPKSSKPKCSM.

Not known. Encoded in the intron of cAMP-dependent protein kinase regulatory chain type I. This chain is Histone-like protein 18C (Mst77F), found in Drosophila melanogaster (Fruit fly).